We begin with the raw amino-acid sequence, 164 residues long: Putative protein ZNF321 (164 aa).

This is Putative protein ZNF321 (ZNF321P) from Homo sapiens (Human).